A 1403-amino-acid chain; its full sequence is Baculoviral IAP repeat-containing protein 1e (1403 aa).

3 BIR repeats span residues 60-127, 159-227, and 278-345; these read EAKR…CEFL, EEAR…CEFL, and EELR…CVFL. The Zn(2+) site is built by Cys-315, Cys-318, His-335, and Cys-342. In terms of domain architecture, NACHT spans 464 to 759; the sequence is SVMCVEGETG…EFLAAVRLTE (296 aa). 473–478 is an ATP binding site; that stretch reads GSGKTT.

Component of the NLRC4 inflammasome, at least composed of NLRC4, caspase-1 (CASP1) and some NAIP protein. Flagellin binding by NAIP5 triggers assembly of the inflammasome, a huge complex that contains a single NAIP5 chain and multiple copies of NLRC4. As to quaternary structure, (Microbial infection) Interacts with S.typhimurium (Salmonella) flagellin. In terms of assembly, (Microbial infection) Interacts with L.pneumophila flagellin. Detected in macrophages (at protein level).

Its function is as follows. Sensor component of the NLRC4 inflammasome that specifically recognizes and binds flagellin from pathogenic bacteria such as Legionella or Salmonella. Association of pathogenic bacteria proteins drives in turn drive assembly and activation of the NLRC4 inflammasome, promoting caspase-1 activation, cytokine production and macrophage pyroptosis. The NLRC4 inflammasome is activated as part of the innate immune response to a range of intracellular bacteria. The NLRC4 inflammasome senses Gram-negative bacteria such as L.pneumophila and P.aeruginosa, enteric pathogens S.typhimurium (Salmonella) and S.flexneri. May contribute to prevent motor-neuron apoptosis induced by a variety of signals. The polypeptide is Baculoviral IAP repeat-containing protein 1e (Mus musculus (Mouse)).